A 558-amino-acid polypeptide reads, in one-letter code: T-complex protein 1 subunit gamma (558 aa).

The cysteines at positions 381 and 387 are disulfide-linked.

Belongs to the TCP-1 chaperonin family. In terms of assembly, heterooligomeric complex of about 850 to 900 kDa that forms two stacked rings, 12 to 16 nm in diameter.

It localises to the cytoplasm. Its function is as follows. Molecular chaperone; assists the folding of proteins upon ATP hydrolysis. Known to play a role, in vitro, in the folding of actin and tubulin. This chain is T-complex protein 1 subunit gamma, found in Thalassiosira weissflogii (Marine diatom).